The following is a 443-amino-acid chain: Tol-Pal system protein TolB (443 aa).

The first 31 residues, 1-31, serve as a signal peptide directing secretion; that stretch reads MTRLAKGKWRSTLGAMMALAVMVAAIPQARA. Residues 423-432 show a composition bias toward polar residues; sequence NERQISTPTE. The disordered stretch occupies residues 423-443; sequence NERQISTPTEASDPAWSPLLP.

It belongs to the TolB family. As to quaternary structure, the Tol-Pal system is composed of five core proteins: the inner membrane proteins TolA, TolQ and TolR, the periplasmic protein TolB and the outer membrane protein Pal. They form a network linking the inner and outer membranes and the peptidoglycan layer.

It localises to the periplasm. Its function is as follows. Part of the Tol-Pal system, which plays a role in outer membrane invagination during cell division and is important for maintaining outer membrane integrity. The protein is Tol-Pal system protein TolB of Rhodospirillum rubrum (strain ATCC 11170 / ATH 1.1.1 / DSM 467 / LMG 4362 / NCIMB 8255 / S1).